The following is a 198-amino-acid chain: Dephospho-CoA kinase (198 aa).

One can recognise a DPCK domain in the interval 3–198; it reads LIGLTGGIAS…VDALWAGLRG (196 aa). Residue 11–16 coordinates ATP; sequence ASGKST.

Belongs to the CoaE family.

The protein localises to the cytoplasm. It carries out the reaction 3'-dephospho-CoA + ATP = ADP + CoA + H(+). It functions in the pathway cofactor biosynthesis; coenzyme A biosynthesis; CoA from (R)-pantothenate: step 5/5. Catalyzes the phosphorylation of the 3'-hydroxyl group of dephosphocoenzyme A to form coenzyme A. The chain is Dephospho-CoA kinase from Leifsonia xyli subsp. xyli (strain CTCB07).